Here is a 382-residue protein sequence, read N- to C-terminus: Galactokinase (382 aa).

Residue E34 to D37 coordinates substrate. ATP is bound at residue G124–S130. Mg(2+) is bound by residues S130 and E162. D174 acts as the Proton acceptor in catalysis. Y223 serves as a coordination point for substrate.

It belongs to the GHMP kinase family. GalK subfamily.

It is found in the cytoplasm. It catalyses the reaction alpha-D-galactose + ATP = alpha-D-galactose 1-phosphate + ADP + H(+). The protein operates within carbohydrate metabolism; galactose metabolism. Its function is as follows. Catalyzes the transfer of the gamma-phosphate of ATP to D-galactose to form alpha-D-galactose-1-phosphate (Gal-1-P). This Salmonella arizonae (strain ATCC BAA-731 / CDC346-86 / RSK2980) protein is Galactokinase.